Reading from the N-terminus, the 1445-residue chain is Spermatogenesis-associated protein 31E1 (1445 aa).

Residues 64–84 form a helical membrane-spanning segment; the sequence is WMMDFILTSVCGLVLLFLLLL. Disordered stretches follow at residues 90 to 115 and 169 to 262; these read PPSP…SRSR and VPAK…PDSS. Positions 101 to 110 are enriched in basic and acidic residues; it reads SREPQRERSG. Residues 241–260 show a composition bias toward pro residues; the sequence is VFPPSPQPHGPLASSPPPPD. Asparagine 408 is a glycosylation site (N-linked (GlcNAc...) asparagine). Disordered regions lie at residues 411 to 430, 460 to 557, 592 to 619, and 637 to 761; these read TQPQ…TVGN, NPSS…ERTQ, LSQP…PGVV, and QEQS…KEHL. A compositionally biased stretch (polar residues) spans 664-681; it reads PQSQAEDTQQALLPSQPS. N-linked (GlcNAc...) asparagine glycans are attached at residues asparagine 819, asparagine 906, and asparagine 1160. 4 disordered regions span residues 894 to 966, 1143 to 1242, 1254 to 1280, and 1378 to 1445; these read FLGK…TCSL, RLPT…IGDK, KGQT…RKGG, and SPKA…CLAS. Polar residues-rich tracts occupy residues 906–915 and 1148–1165; these read NRTTSKSVPT and APLS…TASQ. Residues 1202 to 1217 are compositionally biased toward basic and acidic residues; the sequence is DKGEAHRRPRTGEQGH.

The protein belongs to the SPATA31 family.

Its subcellular location is the membrane. May play a role in spermatogenesis. The sequence is that of Spermatogenesis-associated protein 31E1 (SPATA31E1) from Homo sapiens (Human).